The chain runs to 107 residues: Phosphoribosyl-ATP pyrophosphatase (107 aa).

This sequence belongs to the PRA-PH family.

It localises to the cytoplasm. The enzyme catalyses 1-(5-phospho-beta-D-ribosyl)-ATP + H2O = 1-(5-phospho-beta-D-ribosyl)-5'-AMP + diphosphate + H(+). It functions in the pathway amino-acid biosynthesis; L-histidine biosynthesis; L-histidine from 5-phospho-alpha-D-ribose 1-diphosphate: step 2/9. The polypeptide is Phosphoribosyl-ATP pyrophosphatase (Nitrobacter hamburgensis (strain DSM 10229 / NCIMB 13809 / X14)).